A 1036-amino-acid chain; its full sequence is PDZ domain-containing RING finger protein 4 (1036 aa).

The RING-type; degenerate zinc-finger motif lies at cysteine 18–cysteine 56. The segment covering alanine 129–proline 160 has biased composition (gly residues). The tract at residues alanine 129–glycine 161 is disordered. 2 PDZ domains span residues threonine 224–threonine 314 and glutamate 402–proline 486. A disordered region spans residues histidine 515 to glutamine 590. Basic and acidic residues predominate over residues asparagine 548 to glutamate 566. Residues asparagine 655–leucine 689 adopt a coiled-coil conformation. Over residues glutamate 726 to serine 735 the composition is skewed to basic and acidic residues. The interval glutamate 726–glutamine 819 is disordered. Residues serine 736–leucine 750 show a composition bias toward polar residues. Low complexity predominate over residues serine 774–glutamate 799. A compositionally biased stretch (basic and acidic residues) spans glutamate 805 to glutamine 819.

The polypeptide is PDZ domain-containing RING finger protein 4 (PDZRN4) (Homo sapiens (Human)).